The following is a 4194-amino-acid chain: Hybrid PKS-NRPS synthetase pydA (4194 aa).

In terms of domain architecture, Ketosynthase family 3 (KS3) spans 14-450 (REPIAVVGSG…GTNAHAIVEN (437 aa)). Catalysis depends on for beta-ketoacyl synthase activity residues C187, H326, and H370. The Malonyl-CoA:ACP transacylase (MAT) domain occupies 565–887 (VFTGQGAQWA…QRGKDDVQAF (323 aa)). Positions 953–1088 (HPLLGTRTTD…GRVIVITGEA (136 aa)) are N-terminal hotdog fold. Residues 953 to 1257 (HPLLGTRTTD…VVSFSEPTAE (305 aa)) enclose the PKS/mFAS DH domain. Catalysis depends on H985, which acts as the Proton acceptor; for dehydratase activity. Positions 1103-1257 (LVDIPEDRFY…VVSFSEPTAE (155 aa)) are C-terminal hotdog fold. Residue D1163 is the Proton donor; for dehydratase activity of the active site. The segment at 1302 to 1596 (YMRQLASLFP…FSGVDSTTHE (295 aa)) is methyltransferase (cMeT) domain. Residues 2141 to 2314 (TYVFFGLTSD…AGSILHIGAV (174 aa)) form the Ketoreductase (KR) domain. One can recognise a Carrier 1 domain in the interval 2421–2505 (TTAEEALEIV…ELVEFAVENM (85 aa)). O-(pantetheine 4'-phosphoryl)serine is present on S2465. The segment at 2512 to 2583 (NMSDSLNAVP…ERDSSTASLE (72 aa)) is disordered. A compositionally biased stretch (low complexity) spans 2526–2547 (APVIPASPPSGSVSSAPSSDPP). The segment covering 2550–2565 (TAETSQHLSESSSKTS) has biased composition (polar residues). Positions 2566-2577 (QPDEKQSEERDS) are enriched in basic and acidic residues. Positions 2591–3023 (EKVLPVSPGQ…QILKDVSLFT (433 aa)) are condensation. Residues 3056–3467 (ANPPQEIALR…RIEGDTQIKL (412 aa)) form an adenylation region. The Carrier 2 domain maps to 3580-3660 (TQLTEAESEL…AMAAVIQDLS (81 aa)). S3620 bears the O-(pantetheine 4'-phosphoryl)serine mark. A Thioester reductase (TE) domain is found at 3701–3920 (ITGATGFLGK…VDLISVERAA (220 aa)). Disordered stretches follow at residues 4031–4110 (RRDK…DEQI) and 4163–4194 (KGEYPCGSDGREEAEEAEWQCDEGHGDGEPDD). A compositionally biased stretch (basic and acidic residues) spans 4057–4072 (RGRDVSPRHPALDHPD). Over residues 4174-4183 (EEAEEAEWQC) the composition is skewed to acidic residues. Residues 4184–4194 (DEGHGDGEPDD) are compositionally biased toward basic and acidic residues.

The protein in the C-terminal section; belongs to the NRP synthetase family. Requires pantetheine 4'-phosphate as cofactor.

It functions in the pathway mycotoxin biosynthesis. Hybrid PKS-NRPS synthetase; part of the gene cluster that mediates the biosynthesis of pyrrocidines, fungal natural products containing a macrocyclic para-cyclophane connected to a decahydrofluorene ring system that show potent antibiotic activities toward Gram-negative bacteria. Within the pathway, the PKS-NRPS pydA, with the help of the trans-enoyl reductase pydC, synthesize the polyketide-tyrosyl acyl thioester product which can be reductively off-loaded by the terminal reductase (R) domain in pydA. The PKS module of pydA acts in combination with the trans-acting enoyl reductase pydC to produce a methylated polyketide attached to the ACP domain. In parallel, the adenylation (A) domain of the NRPS module activated L-tyrosine, which is then transferred to the ACP domain. The condensation (C) domain subsequently link this group to the polyketide chain, forming an enzyme-bound amide. The alpha/beta hydrolase pydG is then required to catalyze the subsequent Knoevenagel condensation that affords the 3-pyrrolin-2-one ring, whereas the four proteins pydB, pydE, pydX and pydZ then function synergistically to form the cyclophane. PydB and the membrane-bound pydX and pydZ are lipid-binding proteins that can sequester and mold the pdyG product into the inverse S-shape. Binding of the medium chain reductase pydE to the complex would trigger the cascade oxidative cyclization. PydY is involved in the Diels-Alder cycloaddition that forms the decahydrofluorene core. Additional non-enzymatic hydroxylation yields pyrrocidine A2 which can be further reduced into pyrrocidine B by an endogenous reductase. The polypeptide is Hybrid PKS-NRPS synthetase pydA (Acremonium sp).